The chain runs to 519 residues: Probable carboxypeptidase S-like 2 (519 aa).

A helical transmembrane segment spans residues 25–45 (FNLIKIIIRNLLIGILLMLVL). Position 151 (His151) interacts with Zn(2+). Asp153 is a catalytic residue. Asp184 serves as a coordination point for Zn(2+). Residue Glu218 is the Proton acceptor of the active site. Positions 219, 246, and 490 each coordinate Zn(2+).

Belongs to the peptidase M20A family. Requires Zn(2+) as cofactor.

It localises to the membrane. In Dictyostelium discoideum (Social amoeba), this protein is Probable carboxypeptidase S-like 2.